Here is a 363-residue protein sequence, read N- to C-terminus: MILTRIILHNYRNIEAAELCPEENFNLLCGDNAQGKTNTLEAIYLLGHFKSFRRGRNEELIGSADRHTRVQGEFLRDGLRETVSITITGDKKNIEINGKRPRQSNEMFGRFPSVLFAPEEVSLPKGFPAGRRALLDRALCQTRPSFLDHARAYQRCLRQRNILLKSGAAAPIVLPWTEELIQTGAMVRLARRRYLDRLLPLLRDIYREICSGRESVNLVYPSESDNLSDLKEELRSNLEREQSRETKYGMTMVGPHRDDPVFMVDDRVLGLYGSQGQQRSFILAFKTAQIIDLEKETGYTPLLLLDDMTSELDRKRQDYFFRFLHQRQGQVFITCTELSPLQNAGFNRMRTFRVREGKLCDYQ.

Position 30-37 (30-37 (GDNAQGKT)) interacts with ATP.

It belongs to the RecF family.

The protein localises to the cytoplasm. Functionally, the RecF protein is involved in DNA metabolism; it is required for DNA replication and normal SOS inducibility. RecF binds preferentially to single-stranded, linear DNA. It also seems to bind ATP. The polypeptide is DNA replication and repair protein RecF (Syntrophotalea carbinolica (strain DSM 2380 / NBRC 103641 / GraBd1) (Pelobacter carbinolicus)).